Here is a 492-residue protein sequence, read N- to C-terminus: UDP-glucosyl transferase 73DL1 (492 aa).

His-27 serves as the catalytic Proton acceptor. Asp-131 (charge relay) is an active-site residue. The UDP site is built by Trp-352, Val-353, His-370, Thr-375, Glu-378, and Tyr-392.

It belongs to the UDP-glycosyltransferase family. In terms of tissue distribution, mainly expressed in flowers, flower buds and young leaves, and, to a lesser extent, in old leaves, stems and roots.

It participates in secondary metabolite biosynthesis; terpenoid biosynthesis. In terms of biological role, component of the oleanane-type triterpene saponins (e.g. saponarioside A and saponarioside B) biosynthetic pathway, leading to the production of natural products with detergent properties used as traditional sources of soap. A glycosyltransferase that mediates the conversion of QA-mono to QA-di via the elongation of the C-3 sugar chain with a D-galactose. The sequence is that of UDP-glucosyl transferase 73DL1 from Saponaria officinalis (Common soapwort).